The chain runs to 291 residues: AA14 family lytic polysaccharide monooxygenase (291 aa).

Residues 1–17 form the signal peptide; it reads MLTTAILFTSLAGSAYA. Asn-141 is a glycosylation site (N-linked (GlcNAc...) asparagine). Cystine bridges form between Cys-192–Cys-197, Cys-199–Cys-220, and Cys-240–Cys-247.

Belongs to the polysaccharide monooxygenase AA14 family. The cofactor is Cu(2+).

Its subcellular location is the secreted. Functionally, lytic polysaccharide monooxygenase (LPMO) that is active against heteroxylan, xyloglucan and cellulose in beta-cellulose and released native oligosaccharides and corresponding C1- and/or C4-oxidized products. May act mainly on heteroxylan with numerous arabinosyl substituents between cellulose fibers rather than on recalcitrant xylan tightly associated with cellulose. Catalysis by LPMOs requires the reduction of the active-site copper from Cu(II) to Cu(I) by a reducing agent and H(2)O(2) or O(2) as a cosubstrate. Shows a branched chain preference, and has synergistic effects with the Penicillium parvum debranching enzyme ABF62C in an enzyme- and ascorbic acid-dependent manner. Also has synergistic effects with the Penicillium parvum GH10 endoxylanase XYN1, and the degree of synergy was greater with step-by-step addition than with simultaneous addition. In Sordaria brevicollis, this protein is AA14 family lytic polysaccharide monooxygenase.